We begin with the raw amino-acid sequence, 580 residues long: Arginine--tRNA ligase (580 aa).

Residues A131–H141 carry the 'HIGH' region motif.

This sequence belongs to the class-I aminoacyl-tRNA synthetase family. As to quaternary structure, monomer.

The protein localises to the cytoplasm. The enzyme catalyses tRNA(Arg) + L-arginine + ATP = L-arginyl-tRNA(Arg) + AMP + diphosphate. The sequence is that of Arginine--tRNA ligase from Cereibacter sphaeroides (strain ATCC 17025 / ATH 2.4.3) (Rhodobacter sphaeroides).